Here is a 257-residue protein sequence, read N- to C-terminus: Melatonin receptor type 1A (257 aa).

The Extracellular portion of the chain corresponds to 5–22; the sequence is LASIVNDGWSLSSLHCQL. A disulfide bridge links cysteine 20 with cysteine 97. Residues 23 to 43 traverse the membrane as a helical segment; the sequence is SGFLMGLSVIGSVFNITGIAI. Topologically, residues 44–64 are cytoplasmic; the sequence is NRYCCICHSLRYNKLYSSTNS. The chain crosses the membrane as a helical span at residues 65-85; the sequence is LCYVFLIWMLTLVAIVPNLCV. Residues 86 to 107 are Extracellular-facing; it reads GTLQYDPRIYSCTFTQSVSSAY. A helical transmembrane segment spans residues 108–128; it reads TIAVVVFHFIVPMLVVIFCYL. At 129-160 the chain is on the cytoplasmic side; sequence RIWALVLQVRWRVKPDNKPKLKPQDFRNFVTM. Residues 161-181 traverse the membrane as a helical segment; the sequence is FVVFVLFAICWAPLNFIGLVV. The Extracellular portion of the chain corresponds to 182–194; sequence ASEPASMAPRIPE. A helical transmembrane segment spans residues 195 to 215; that stretch reads WLFVASYYMGYFNSCLNAIIY. Topologically, residues 216–257 are cytoplasmic; it reads GLLNQNFRQEYRKIIVSLCTTKMFFVDSSNHVAHRIKRKPSP.

Belongs to the G-protein coupled receptor 1 family.

It localises to the cell membrane. In terms of biological role, high affinity receptor for melatonin. Likely to mediate the reproductive and circadian actions of melatonin. The activity of this receptor is mediated by pertussis toxin sensitive G proteins that inhibit adenylate cyclase activity. Possibly involved in sleep induction, by melatonin activation of the potassium channel KCNMA1/BK and the dissociation of G-beta and G-gamma subunits, thereby decreasing synaptic transmission. This Bos taurus (Bovine) protein is Melatonin receptor type 1A (MTNR1A).